We begin with the raw amino-acid sequence, 249 residues long: Proteasome subunit alpha type-7-B (249 aa).

Belongs to the peptidase T1A family. The 26S proteasome consists of a 20S proteasome core and two 19S regulatory subunits. The 20S proteasome core is composed of 28 subunits that are arranged in four stacked rings, resulting in a barrel-shaped structure. The two end rings are each formed by seven alpha subunits, and the two central rings are each formed by seven beta subunits. The catalytic chamber with the active sites is on the inside of the barrel.

The protein localises to the cytoplasm. Its subcellular location is the nucleus. Functionally, the proteasome is a multicatalytic proteinase complex which is characterized by its ability to cleave peptides with Arg, Phe, Tyr, Leu, and Glu adjacent to the leaving group at neutral or slightly basic pH. The proteasome has an ATP-dependent proteolytic activity. The chain is Proteasome subunit alpha type-7-B (PAD1) from Oryza sativa subsp. indica (Rice).